Here is a 446-residue protein sequence, read N- to C-terminus: Trigger factor (446 aa).

The PPIase FKBP-type domain occupies 163-248 (GDRLVIDFEG…VKEIKKKNLL (86 aa)).

Belongs to the FKBP-type PPIase family. Tig subfamily.

The protein resides in the cytoplasm. The enzyme catalyses [protein]-peptidylproline (omega=180) = [protein]-peptidylproline (omega=0). Functionally, involved in protein export. Acts as a chaperone by maintaining the newly synthesized protein in an open conformation. Functions as a peptidyl-prolyl cis-trans isomerase. The protein is Trigger factor of Natranaerobius thermophilus (strain ATCC BAA-1301 / DSM 18059 / JW/NM-WN-LF).